The primary structure comprises 119 residues: Acidic phospholipase A2 DE-III (119 aa).

Cystine bridges form between Cys11–Cys72, Cys26–Cys118, Cys28–Cys44, Cys43–Cys99, Cys50–Cys92, Cys60–Cys85, and Cys79–Cys90. Positions 27, 29, and 31 each coordinate Ca(2+). The active site involves His47. Asp48 lines the Ca(2+) pocket. The active site involves Asp93.

Belongs to the phospholipase A2 family. Group I subfamily. D49 sub-subfamily. Ca(2+) is required as a cofactor. As to expression, expressed by the venom gland.

The protein localises to the secreted. The enzyme catalyses a 1,2-diacyl-sn-glycero-3-phosphocholine + H2O = a 1-acyl-sn-glycero-3-phosphocholine + a fatty acid + H(+). PLA2 catalyzes the calcium-dependent hydrolysis of the 2-acyl groups in 3-sn-phosphoglycerides. This is Acidic phospholipase A2 DE-III from Naja melanoleuca (Forest cobra).